The primary structure comprises 61 residues: Small ribosomal subunit protein bS21 (61 aa).

The disordered stretch occupies residues 40-61 (KPSVKRKKKSEAARKRKNKRRF). Residues 43–61 (VKRKKKSEAARKRKNKRRF) show a composition bias toward basic residues.

The protein belongs to the bacterial ribosomal protein bS21 family.

This is Small ribosomal subunit protein bS21 from Ligilactobacillus salivarius (strain UCC118) (Lactobacillus salivarius).